A 155-amino-acid polypeptide reads, in one-letter code: SsrA-binding protein (155 aa).

Belongs to the SmpB family.

It is found in the cytoplasm. In terms of biological role, required for rescue of stalled ribosomes mediated by trans-translation. Binds to transfer-messenger RNA (tmRNA), required for stable association of tmRNA with ribosomes. tmRNA and SmpB together mimic tRNA shape, replacing the anticodon stem-loop with SmpB. tmRNA is encoded by the ssrA gene; the 2 termini fold to resemble tRNA(Ala) and it encodes a 'tag peptide', a short internal open reading frame. During trans-translation Ala-aminoacylated tmRNA acts like a tRNA, entering the A-site of stalled ribosomes, displacing the stalled mRNA. The ribosome then switches to translate the ORF on the tmRNA; the nascent peptide is terminated with the 'tag peptide' encoded by the tmRNA and targeted for degradation. The ribosome is freed to recommence translation, which seems to be the essential function of trans-translation. The chain is SsrA-binding protein from Streptococcus pyogenes serotype M4 (strain MGAS10750).